The chain runs to 356 residues: Protein MGF 360-10L (356 aa).

Residues 58 to 90 (DLNTALMIAAKENNYQLIKLFTEWGANINYGYI) form an ANK repeat. Asn125 carries an N-linked (GlcNAc...) asparagine; by host glycan. The next 2 helical transmembrane spans lie at 206-228 (LNTW…YLYE) and 249-271 (NFLT…LAAI). N-linked (GlcNAc...) asparagine; by host glycosylation is present at Asn352.

It belongs to the asfivirus MGF 360 family.

It is found in the host membrane. In terms of biological role, plays a role in virus cell tropism, and may be required for efficient virus replication in macrophages. The protein is Protein MGF 360-10L of Ornithodoros (relapsing fever ticks).